The chain runs to 387 residues: UPF0400 protein C337.03 (387 aa).

A CID domain is found at 1-133 (MALTPDTVSS…SLQERFNNAE (133 aa)). Positions 177-255 (KSYLEKQSDY…IISNLENKES (79 aa)) form a coiled coil. A disordered region spans residues 257-387 (TATSTLTDAG…SSAAGLYGDS (131 aa)). Residues 283 to 297 (SPPSSSPNSDDAYSP) are compositionally biased toward low complexity. The span at 298-323 (QVDSYSPSINSVPYTSNIVENPSEDN) shows a compositional bias: polar residues. Acidic residues predominate over residues 353–365 (NEEESKELPEDSD). A compositionally biased stretch (low complexity) spans 370 to 379 (DSSPSSDDSS). The residue at position 372 (S372) is a Phosphoserine.

This sequence belongs to the UPF0400 (RTT103) family.

The protein is UPF0400 protein C337.03 of Schizosaccharomyces pombe (strain 972 / ATCC 24843) (Fission yeast).